The primary structure comprises 320 residues: uncharacterized protein (320 aa).

Residues 1 to 40 (MDHPSTSSLPRKKVKAGVKKAGKKTGKKTTGKKKTTPSAI) are disordered. The segment covering 10 to 35 (PRKKVKAGVKKAGKKTGKKTTGKKKT) has biased composition (basic residues). A helical membrane pass occupies residues 51–71 (LLVLLAVLSYLAALSLGLYIM). N-linked (GlcNAc...) asparagine glycans are attached at residues Asn92, Asn122, Asn154, and Asn167. The next 2 helical transmembrane spans lie at 186–206 (PLVHLLLFFVTGIMLFVAMTG) and 216–236 (MLVTAIALSAFSLALALVTVL). Asn247 carries an N-linked (GlcNAc...) asparagine glycan. A helical transmembrane segment spans residues 272–292 (VQGALVAIVAVFYLTMGVVFV).

Its subcellular location is the membrane. It participates in secondary metabolite biosynthesis; terpenoid biosynthesis. Its function is as follows. Part of the gene cluster that mediates the biosynthesis of an ophiobolin family sesterterpenoid. This is an uncharacterized protein from Aspergillus terreus.